The sequence spans 364 residues: Probable dual-specificity RNA methyltransferase RlmN (364 aa).

Residue Glu-106 is the Proton acceptor of the active site. Positions 112 to 350 (YPQRNTVCIS…SCTVRDTRGR (239 aa)) constitute a Radical SAM core domain. A disulfide bridge connects residues Cys-119 and Cys-356. [4Fe-4S] cluster is bound by residues Cys-126, Cys-130, and Cys-133. S-adenosyl-L-methionine is bound by residues 177–178 (GE), Ser-211, 234–236 (SLH), and Asn-313. Catalysis depends on Cys-356, which acts as the S-methylcysteine intermediate.

This sequence belongs to the radical SAM superfamily. RlmN family. Requires [4Fe-4S] cluster as cofactor.

The protein localises to the cytoplasm. It carries out the reaction adenosine(2503) in 23S rRNA + 2 reduced [2Fe-2S]-[ferredoxin] + 2 S-adenosyl-L-methionine = 2-methyladenosine(2503) in 23S rRNA + 5'-deoxyadenosine + L-methionine + 2 oxidized [2Fe-2S]-[ferredoxin] + S-adenosyl-L-homocysteine. The enzyme catalyses adenosine(37) in tRNA + 2 reduced [2Fe-2S]-[ferredoxin] + 2 S-adenosyl-L-methionine = 2-methyladenosine(37) in tRNA + 5'-deoxyadenosine + L-methionine + 2 oxidized [2Fe-2S]-[ferredoxin] + S-adenosyl-L-homocysteine. Its function is as follows. Specifically methylates position 2 of adenine 2503 in 23S rRNA and position 2 of adenine 37 in tRNAs. This Mycobacterium marinum (strain ATCC BAA-535 / M) protein is Probable dual-specificity RNA methyltransferase RlmN.